The following is a 258-amino-acid chain: Uroplakin-1a (258 aa).

The Cytoplasmic segment spans residues 1–14 (MASAAAAEAEKGSP). Residues 15-35 (VVVGLLVVGNIIILLSGLSLF) form a helical membrane-spanning segment. Residues 36–59 (AETIWVTADQYRVYPLMGVSGKDD) are Extracellular-facing. The chain crosses the membrane as a helical span at residues 60–86 (VFAGAWIAIFCGFSFFMVASFGVGAAL). Residues 87–91 (CRRRS) are Cytoplasmic-facing. A helical membrane pass occupies residues 92 to 112 (MVLTYLVLMLIVYIFECASCI). Topologically, residues 113–230 (TSYTHRDYMV…HIGHAIDSYT (118 aa)) are extracellular. N170 is a glycosylation site (N-linked (GlcNAc...) asparagine). A helical transmembrane segment spans residues 231 to 252 (WGISWFGFAILMWTLPVMLIAM). At 253 to 258 (YFYTML) the chain is on the cytoplasmic side.

Belongs to the tetraspanin (TM4SF) family. Homodimer; disulfide-linked. Interacts with uroplakin-2 (UPK2). High expression restricted to ureteric urothelium (most superficial cells); low expression in prostate. Expression in normal urothelial cells is lost in culture. Some expression in tumor cell lines derived from urothelial malignancies.

It localises to the membrane. Component of the asymmetric unit membrane (AUM); a highly specialized biomembrane elaborated by terminally differentiated urothelial cells. May play an important role in normal bladder epithelial physiology, possibly in regulating membrane permeability of superficial umbrella cells or in stabilizing the apical membrane through AUM/cytoskeletal interactions. This chain is Uroplakin-1a (UPK1A), found in Homo sapiens (Human).